The following is a 1112-amino-acid chain: Phytochrome E (1112 aa).

Positions 1–20 (MGFESSSSAASNMKPQPQKS) are disordered. The GAF domain occupies 217–387 (DIGALCDTVV…AFGLQLQMEL (171 aa)). C322 contacts phytochromobilin. PAS domains follow at residues 595–666 (FVCE…LQGE) and 732–803 (DYKT…LISL). In terms of domain architecture, Histidine kinase spans 877-1096 (YVRQEIKNPL…FFQVDLQVKT (220 aa)).

It belongs to the phytochrome family. Homodimer. Contains one covalently linked phytochromobilin chromophore.

Regulatory photoreceptor which exists in two forms that are reversibly interconvertible by light: the Pr form that absorbs maximally in the red region of the spectrum and the Pfr form that absorbs maximally in the far-red region. Photoconversion of Pr to Pfr induces an array of morphogenic responses, whereas reconversion of Pfr to Pr cancels the induction of those responses. Pfr controls the expression of a number of nuclear genes including those encoding the small subunit of ribulose-bisphosphate carboxylase, chlorophyll A/B binding protein, protochlorophyllide reductase, rRNA, etc. It also controls the expression of its own gene(s) in a negative feedback fashion. The polypeptide is Phytochrome E (PHYE) (Arabidopsis thaliana (Mouse-ear cress)).